A 218-amino-acid polypeptide reads, in one-letter code: N-(5'-phosphoribosyl)anthranilate isomerase (218 aa).

It belongs to the TrpF family.

It carries out the reaction N-(5-phospho-beta-D-ribosyl)anthranilate = 1-(2-carboxyphenylamino)-1-deoxy-D-ribulose 5-phosphate. The protein operates within amino-acid biosynthesis; L-tryptophan biosynthesis; L-tryptophan from chorismate: step 3/5. The protein is N-(5'-phosphoribosyl)anthranilate isomerase of Rhodopseudomonas palustris (strain BisA53).